Here is a 600-residue protein sequence, read N- to C-terminus: DNA ligase (600 aa).

ATP is bound at residue Asp-259. The active-site N6-AMP-lysine intermediate is the Lys-261. ATP is bound by residues Arg-266, Arg-281, Glu-311, Phe-351, Arg-428, and Lys-434.

Belongs to the ATP-dependent DNA ligase family. It depends on Mg(2+) as a cofactor.

It catalyses the reaction ATP + (deoxyribonucleotide)n-3'-hydroxyl + 5'-phospho-(deoxyribonucleotide)m = (deoxyribonucleotide)n+m + AMP + diphosphate.. Functionally, DNA ligase that seals nicks in double-stranded DNA during DNA replication, DNA recombination and DNA repair. This is DNA ligase from Acidianus ambivalens (Desulfurolobus ambivalens).